A 361-amino-acid polypeptide reads, in one-letter code: Endo-1,4-beta-xylanase 2 (361 aa).

An N-terminal signal peptide occupies residues 1–26; sequence MHFSTITAALALLGLGAATPTDYSTS. Positions 46-354 constitute a GH10 domain; it reads IGTALTIRDD…KPAYSSVLKT (309 aa). N-linked (GlcNAc...) asparagine glycosylation is found at asparagine 88 and asparagine 130. Residue glutamate 160 is the Proton donor of the active site. The Nucleophile role is filled by glutamate 276. Residues cysteine 304 and cysteine 310 are joined by a disulfide bond.

This sequence belongs to the glycosyl hydrolase 10 (cellulase F) family.

Its subcellular location is the secreted. It carries out the reaction Endohydrolysis of (1-&gt;4)-beta-D-xylosidic linkages in xylans.. It participates in glycan degradation; xylan degradation. Its function is as follows. Endo-1,4-beta-xylanase involved in the hydrolysis of xylan, a major structural heterogeneous polysaccharide found in plant biomass representing the second most abundant polysaccharide in the biosphere, after cellulose. Hydrolyzes birch-wood xylan, with a similar activity toward oat-spelt xylan. Also shows weak activities toward pNP-beta-D-cellobioside and pNP-beta-D-xylopyranoside, but no detectable activity toward carboxymethyl cellulose and pNP-beta-L-arabinofuranoside.-. This Aureobasidium pullulans (Black yeast) protein is Endo-1,4-beta-xylanase 2 (xynII).